Here is a 104-residue protein sequence, read N- to C-terminus: U20-lycotoxin-Ls1d (104 aa).

The N-terminal stretch at 1 to 30 is a signal peptide; that stretch reads MFSTSDQVSKMNSRILSALLILGIATCVIA. Residues 31 to 76 form the WAP domain; that stretch reads GGFCPKSRHPQCNLSYKINDCCAQSDCRVGSVCCVEGCGNVCRAES. Disulfide bonds link cysteine 34/cysteine 64, cysteine 42/cysteine 68, cysteine 51/cysteine 63, cysteine 52/cysteine 90, and cysteine 57/cysteine 72.

It belongs to the venom protein 11 family. 02 (wap-2) subfamily. Post-translationally, contains 5 disulfide bonds. In terms of tissue distribution, expressed by the venom gland.

It is found in the secreted. Has antibacterial activity. The protein is U20-lycotoxin-Ls1d of Lycosa singoriensis (Wolf spider).